Consider the following 299-residue polypeptide: Ribosomal protein L11 methyltransferase (299 aa).

S-adenosyl-L-methionine contacts are provided by Thr-149, Gly-170, Asp-192, and Asn-234.

It belongs to the methyltransferase superfamily. PrmA family.

The protein resides in the cytoplasm. It carries out the reaction L-lysyl-[protein] + 3 S-adenosyl-L-methionine = N(6),N(6),N(6)-trimethyl-L-lysyl-[protein] + 3 S-adenosyl-L-homocysteine + 3 H(+). In terms of biological role, methylates ribosomal protein L11. This is Ribosomal protein L11 methyltransferase from Chromohalobacter salexigens (strain ATCC BAA-138 / DSM 3043 / CIP 106854 / NCIMB 13768 / 1H11).